We begin with the raw amino-acid sequence, 161 residues long: Transcriptional repressor NrdR (161 aa).

The segment covering 1–11 (MRCPSCSSLDT) has biased composition (polar residues). Residues 1-20 (MRCPSCSSLDTQVKDSRPTE) form a disordered region. A zinc finger spans residues 3–34 (CPSCSSLDTQVKDSRPTEDSAVIRRRRVCMAC). The region spanning 49-139 (LTVIKRNGRR…VYRNFREAKD (91 aa)) is the ATP-cone domain.

Belongs to the NrdR family. The cofactor is Zn(2+).

In terms of biological role, negatively regulates transcription of bacterial ribonucleotide reductase nrd genes and operons by binding to NrdR-boxes. The sequence is that of Transcriptional repressor NrdR from Rhodopseudomonas palustris (strain BisB18).